We begin with the raw amino-acid sequence, 118 residues long: Waprin-Enh1 (118 aa).

A signal peptide spans 1–24 (MKTLTGLLLVGLLALWIGLPSTSS). WAP domains follow at residues 25-72 (KILF…RSCR) and 74-118 (PPVL…RICK). Cystine bridges form between cysteine 30–cysteine 63, cysteine 40–cysteine 67, cysteine 50–cysteine 62, cysteine 56–cysteine 71, cysteine 81–cysteine 109, cysteine 88–cysteine 113, cysteine 96–cysteine 108, and cysteine 102–cysteine 117.

The protein belongs to the venom waprin family. As to expression, expressed by the venom gland.

It is found in the secreted. Damages membranes of susceptible bacteria. Has no hemolytic activity. Not toxic to mice. Does not inhibit the proteinases elastase and cathepsin G. The sequence is that of Waprin-Enh1 from Pseudoferania polylepis (Macleay's water snake).